Reading from the N-terminus, the 379-residue chain is Lipid-A-disaccharide synthase (379 aa).

Belongs to the LpxB family.

The catalysed reaction is a lipid X + a UDP-2-N,3-O-bis[(3R)-3-hydroxyacyl]-alpha-D-glucosamine = a lipid A disaccharide + UDP + H(+). It participates in bacterial outer membrane biogenesis; LPS lipid A biosynthesis. Its function is as follows. Condensation of UDP-2,3-diacylglucosamine and 2,3-diacylglucosamine-1-phosphate to form lipid A disaccharide, a precursor of lipid A, a phosphorylated glycolipid that anchors the lipopolysaccharide to the outer membrane of the cell. This chain is Lipid-A-disaccharide synthase, found in Vibrio cholerae serotype O1 (strain ATCC 39541 / Classical Ogawa 395 / O395).